The sequence spans 82 residues: Acyl carrier protein (82 aa).

The 76-residue stretch at 3-78 (QEIFERVKKV…KAVEHISEKV (76 aa)) folds into the Carrier domain. Position 38 is an O-(pantetheine 4'-phosphoryl)serine (serine 38).

The protein belongs to the acyl carrier protein (ACP) family. In terms of processing, 4'-phosphopantetheine is transferred from CoA to a specific serine of apo-ACP by AcpS. This modification is essential for activity because fatty acids are bound in thioester linkage to the sulfhydryl of the prosthetic group.

The protein resides in the cytoplasm. It functions in the pathway lipid metabolism; fatty acid biosynthesis. Its function is as follows. Carrier of the growing fatty acid chain in fatty acid biosynthesis. The protein is Acyl carrier protein of Gloeothece citriformis (strain PCC 7424) (Cyanothece sp. (strain PCC 7424)).